An 877-amino-acid chain; its full sequence is DNA polymerase I (877 aa).

In terms of domain architecture, 5'-3' exonuclease spans 1–310 (MKKKLVLIDG…FTLADRVTEE (310 aa)). The 3'-5' exonuclease domain occupies 311-465 (MLADKAALVV…ALERPFLDEL (155 aa)). Residues 469 to 877 (EQDRLLVELE…HYGSTWYDAK (409 aa)) are polymerase.

The protein belongs to the DNA polymerase type-A family. In terms of assembly, single-chain monomer with multiple functions.

It carries out the reaction DNA(n) + a 2'-deoxyribonucleoside 5'-triphosphate = DNA(n+1) + diphosphate. In addition to polymerase activity, this DNA polymerase exhibits 3'-5' and 5'-3' exonuclease activity. The polypeptide is DNA polymerase I (polA) (Bacillus caldotenax).